Reading from the N-terminus, the 889-residue chain is Alanine--tRNA ligase (889 aa).

Residues His574, His578, Cys682, and His686 each contribute to the Zn(2+) site.

The protein belongs to the class-II aminoacyl-tRNA synthetase family. The cofactor is Zn(2+).

It localises to the cytoplasm. It carries out the reaction tRNA(Ala) + L-alanine + ATP = L-alanyl-tRNA(Ala) + AMP + diphosphate. In terms of biological role, catalyzes the attachment of alanine to tRNA(Ala) in a two-step reaction: alanine is first activated by ATP to form Ala-AMP and then transferred to the acceptor end of tRNA(Ala). Also edits incorrectly charged Ser-tRNA(Ala) and Gly-tRNA(Ala) via its editing domain. This is Alanine--tRNA ligase from Orientia tsutsugamushi (strain Ikeda) (Rickettsia tsutsugamushi).